Consider the following 151-residue polypeptide: Prefoldin subunit alpha (151 aa).

This sequence belongs to the prefoldin subunit alpha family. In terms of assembly, heterohexamer of two alpha and four beta subunits.

The protein localises to the cytoplasm. Its function is as follows. Molecular chaperone capable of stabilizing a range of proteins. Seems to fulfill an ATP-independent, HSP70-like function in archaeal de novo protein folding. The protein is Prefoldin subunit alpha (pfdA) of Aeropyrum pernix (strain ATCC 700893 / DSM 11879 / JCM 9820 / NBRC 100138 / K1).